Reading from the N-terminus, the 389-residue chain is 26S proteasome regulatory subunit 10B (389 aa).

Lys72 is modified (N6-acetyllysine). ATP is bound at residue Gly174–Thr181. Residue Lys206 is modified to N6-acetyllysine. A Phosphoserine modification is found at Ser244.

It belongs to the AAA ATPase family. As to quaternary structure, component of the 19S proteasome regulatory particle complex. The 26S proteasome consists of a 20S core particle (CP) and two 19S regulatory subunits (RP). The regulatory particle is made of a lid composed of 9 subunits, a base containing 6 ATPases including PSMC6 and few additional components. Interacts with PAAF1.

The protein localises to the cytoplasm. It localises to the nucleus. In terms of biological role, component of the 26S proteasome, a multiprotein complex involved in the ATP-dependent degradation of ubiquitinated proteins. This complex plays a key role in the maintenance of protein homeostasis by removing misfolded or damaged proteins, which could impair cellular functions, and by removing proteins whose functions are no longer required. Therefore, the proteasome participates in numerous cellular processes, including cell cycle progression, apoptosis, or DNA damage repair. PSMC6 belongs to the heterohexameric ring of AAA (ATPases associated with diverse cellular activities) proteins that unfolds ubiquitinated target proteins that are concurrently translocated into a proteolytic chamber and degraded into peptides. This chain is 26S proteasome regulatory subunit 10B (PSMC6), found in Homo sapiens (Human).